The following is a 270-amino-acid chain: F-actin-capping protein subunit beta (270 aa).

The protein belongs to the F-actin-capping protein beta subunit family. In terms of assembly, component of the F-actin capping complex, composed of a heterodimer of an alpha and a beta subunit.

The protein localises to the cytoplasm. Its subcellular location is the cytoskeleton. In terms of biological role, F-actin-capping proteins bind in a Ca(2+)-independent manner to the fast growing ends of actin filaments (barbed end) thereby blocking the exchange of subunits at these ends. Unlike other capping proteins (such as gelsolin and severin), these proteins do not sever actin filaments. The chain is F-actin-capping protein subunit beta (cap-2) from Caenorhabditis elegans.